We begin with the raw amino-acid sequence, 93 residues long: Putative pterin-4-alpha-carbinolamine dehydratase (93 aa).

It belongs to the pterin-4-alpha-carbinolamine dehydratase family.

The enzyme catalyses (4aS,6R)-4a-hydroxy-L-erythro-5,6,7,8-tetrahydrobiopterin = (6R)-L-erythro-6,7-dihydrobiopterin + H2O. The chain is Putative pterin-4-alpha-carbinolamine dehydratase from Chloroflexus aurantiacus (strain ATCC 29366 / DSM 635 / J-10-fl).